The sequence spans 1411 residues: Alpha-latroinsectotoxin-Lt1a (1411 aa).

A propeptide spanning residues 1-35 (ACSSPEVSIFHFFVYAGSFVKNFKKMKGSSAISKR) is cleaved from the precursor. The segment at 245 to 264 (ALYALFYGTETFISIMFYLV) is helix H8 is the probable transmembrane region of the tetrameric pore inserted in the target cell membrane. 20 ANK repeats span residues 462 to 495 (DIHRDLYNAAQVPYAREALSISRTLIQNGANVSE), 499 to 528 (LGRGAIHAAASAGNYDVGELLLNKDINLLE), 533 to 562 (NGYTPLHIAADSNKNDFVMFLIGNNADVNV), 567 to 597 (DLFTPLHLAARRDLTDVTQTLIDITEIDLNA), 601 to 630 (SGFTPLHLSISSTSETAAILIRNTNAVINI), 634 to 663 (VGLTPLHLATLQNNLSVSKLLAGKGAYLND), 667 to 697 (NGMTPLHYAAMTGNLEMVDFLLNQQYININA), 702 to 732 (KKWTPLHLAILFKKNDVAERLLSDENLNIRL), 736 to 765 (GGINPLHLASATGNKQLVIELLAKNADVTR), 769 to 798 (KGFSALHLGIIGKNEEIPFFLVEKGANVND), 802 to 831 (SGVTPLHFAAGLGKANIFRLLLSRGADIKA), 835 to 864 (NSQMPIHEAVSNGHLEIVRILIEKDPSLMN), 869 to 898 (RNEYPFYLAVEKRYKDIFDYFVSKDANVNE), 902 to 931 (NGNTLLHLFSSTGELEVVQFLMQNGANFRL), 935 to 965 (ERKTFFDLAIENGRLNIVAFAVEKNKVNLQA), 968 to 999 (RGKTILYHAICDSAKYDKIEIVKYFIEKLNES), 1000 to 1029 (ECNPLHEAAAYAHLDLVKYFVQERGINPAE), 1080 to 1109 (QENTPITVAIFANKVSILNYLVGIGADPNQ), 1112 to 1142 (DGDPPLYIAARQGRFEIVRCLIEVHKVDINT), and 1146 to 1175 (ERFTALHAAARNDFMDVVKYLVRQGADVNA). Residues 1196-1411 (QSSRFLRSGH…KVNSNVSQIK (216 aa)) constitute a propeptide that is removed on maturation. Positions 1230–1249 (DKLTQQISSKGTRSDSNSTE) are enriched in polar residues. A disordered region spans residues 1230–1254 (DKLTQQISSKGTRSDSNSTEGKMHS). One copy of the ANK 21 repeat lies at 1331-1361 (NVHSKIYKAIMSGRRSVISEMLCSFAEEYSK).

It belongs to the cationic peptide 01 (latrotoxin) family. 02 (alpha-latroinsectotoxin) subfamily. As to quaternary structure, homotetramer in membranes. In terms of tissue distribution, expressed by the venom gland.

The protein localises to the secreted. The protein resides in the target cell membrane. Insecticidal presynaptic neurotoxin that induces massive neurotransmitter release at insect (but not vertebrate) neuromuscular junctions. Native toxin forms cation-permeable pores (with high permeability to calcium) in lipid membranes locust muscle membrane and artificial lipid bilayers. May bind to insect neurexin-1 homolog, insect adhesion G protein-coupled receptor L1 homolog, and insect receptor-type tyrosine-protein phosphatase S homolog, and induces neurotransmitter exocytosis both by forming tetrameric pores in membranes and signaling via G protein-coupled receptor. Oligomerization is a process independent of divalent cations. The toxin forms channels with 0.55-0.58 nm entrance diameter and a relatively small conductance in planar phospholipid membranes. This chain is Alpha-latroinsectotoxin-Lt1a, found in Latrodectus tredecimguttatus (Mediterranean black widow spider).